The primary structure comprises 264 residues: Cysteine-rich repeat secretory protein 26 (264 aa).

Residues 1-27 (MSSNIFGSVPILVVVAIQLLLVHNVSS) form the signal peptide. 2 Gnk2-homologous domains span residues 34-142 (YLNH…SVDS) and 148-261 (YKRM…LYPF).

This sequence belongs to the cysteine-rich repeat secretory protein family.

It localises to the secreted. In Arabidopsis thaliana (Mouse-ear cress), this protein is Cysteine-rich repeat secretory protein 26 (CRRSP26).